The following is a 1044-amino-acid chain: Elongation factor 3B (1044 aa).

Residue serine 2 is modified to N-acetylserine. An HEAT 1 repeat occupies 5–42 (QQSITVLEELFRKLETATSETREGISSELSSFLNGNII). 3 residues coordinate ADP: isoleucine 42, histidine 44, and serine 83. HEAT repeat units follow at residues 86–123 (PYIV…AVNP), 124–162 (VAVK…AAKE), 166–203 (LRMP…TVDN), 205–241 (DIER…EVTP), 242–279 (ATLS…LVED), and 285–323 (PFLG…VGNV). 2 positions are modified to N6,N6,N6-trimethyllysine: lysine 187 and lysine 196. ADP contacts are provided by threonine 392, histidine 396, and glutamate 397. 2 consecutive ABC transporter domains span residues 426 to 641 (DEGE…YYEL) and 667 to 993 (VKVS…KKEE). Asparagine 703 lines the ADP pocket. Position 789 is an N6,N6,N6-trimethyllysine (lysine 789). Glutamate 922, asparagine 925, and histidine 951 together coordinate ADP. Phosphothreonine is present on threonine 972. Serine 974 bears the Phosphoserine mark. A disordered region spans residues 975 to 1044 (GHNWVAGQGA…DEYVSSDEDF (70 aa)). A compositionally biased stretch (basic and acidic residues) spans 987-999 (RIEKKEEEGDKFD). A compositionally biased stretch (basic residues) spans 1020–1031 (RKKKKERMKKKK). Phosphoserine occurs at positions 1039 and 1040.

Belongs to the ABC transporter superfamily. ABCF family. EF3 subfamily. In terms of assembly, monomer.

Its subcellular location is the cytoplasm. It carries out the reaction ATP + H2O = ADP + phosphate + H(+). The protein operates within protein biosynthesis; polypeptide chain elongation. Functionally, ribosome-dependent ATPase that promotes the translation of proteins required for detoxification of reactive oxygen species. Required for the ATP-dependent release of deacylated tRNA from the ribosomal E-site during protein biosynthesis. Stimulates the eEF1A-dependent binding of aminoacyl-tRNA to the ribosomal A-site, which has reduced affinity for tRNA as long as the E-site is occupied. Assists translation termination by stimulating the release of nascent protein from the ribosome by release factors. The sequence is that of Elongation factor 3B from Saccharomyces cerevisiae (strain ATCC 204508 / S288c) (Baker's yeast).